The chain runs to 233 residues: Adenosine 5'-phosphosulfate reductase (233 aa).

[4Fe-4S] cluster contacts are provided by cysteine 120, cysteine 121, cysteine 203, and cysteine 206. The active-site Nucleophile; cysteine thiosulfonate intermediate is cysteine 229.

This sequence belongs to the PAPS reductase family. CysH subfamily. The cofactor is [4Fe-4S] cluster.

It is found in the cytoplasm. It carries out the reaction [thioredoxin]-disulfide + sulfite + AMP + 2 H(+) = adenosine 5'-phosphosulfate + [thioredoxin]-dithiol. The protein operates within sulfur metabolism; hydrogen sulfide biosynthesis; sulfite from sulfate. Catalyzes the formation of sulfite from adenosine 5'-phosphosulfate (APS) using thioredoxin as an electron donor. The chain is Adenosine 5'-phosphosulfate reductase from Bacillus velezensis (strain DSM 23117 / BGSC 10A6 / LMG 26770 / FZB42) (Bacillus amyloliquefaciens subsp. plantarum).